Reading from the N-terminus, the 78-residue chain is Acyl carrier protein (78 aa).

The 75-residue stretch at 4–78 (AEIKDKVYDI…QQAIDYIVKK (75 aa)) folds into the Carrier domain. The residue at position 39 (S39) is an O-(pantetheine 4'-phosphoryl)serine.

Belongs to the acyl carrier protein (ACP) family. 4'-phosphopantetheine is transferred from CoA to a specific serine of apo-ACP by AcpS. This modification is essential for activity because fatty acids are bound in thioester linkage to the sulfhydryl of the prosthetic group.

The protein localises to the cytoplasm. It participates in lipid metabolism; fatty acid biosynthesis. Its function is as follows. Carrier of the growing fatty acid chain in fatty acid biosynthesis. The chain is Acyl carrier protein from Chlorobium phaeovibrioides (strain DSM 265 / 1930) (Prosthecochloris vibrioformis (strain DSM 265)).